The chain runs to 287 residues: Cell division protein ZipA (287 aa).

A topological domain (periplasmic) is located at residue Met-1. Residues 2–22 (EIGLREWLIVIGIIVIAGILF) form a helical membrane-spanning segment. Residues 23–287 (DGWRRMRGGK…FERRALTQKR (265 aa)) are Cytoplasmic-facing. The tract at residues 70–143 (LDEHDLPSMS…APRQSVNDQP (74 aa)) is disordered.

Belongs to the ZipA family. As to quaternary structure, interacts with FtsZ via their C-terminal domains.

It localises to the cell inner membrane. Functionally, essential cell division protein that stabilizes the FtsZ protofilaments by cross-linking them and that serves as a cytoplasmic membrane anchor for the Z ring. Also required for the recruitment to the septal ring of downstream cell division proteins. This Pseudomonas fluorescens (strain SBW25) protein is Cell division protein ZipA.